The primary structure comprises 391 residues: Processive diacylglycerol beta-glucosyltransferase (391 aa).

The protein belongs to the glycosyltransferase 28 family. UgtP subfamily.

It localises to the cell membrane. The enzyme catalyses a 1,2-diacyl-3-O-(beta-D-glucopyranosyl)-sn-glycerol + UDP-alpha-D-glucose = a 1,2-diacyl-3-O-(beta-D-Glc-(1-&gt;6)-beta-D-Glc)-sn-glycerol + UDP + H(+). It carries out the reaction a 1,2-diacyl-sn-glycerol + UDP-alpha-D-glucose = a 1,2-diacyl-3-O-(beta-D-glucopyranosyl)-sn-glycerol + UDP + H(+). It participates in glycolipid metabolism; diglucosyl-diacylglycerol biosynthesis. Processive glucosyltransferase involved in the biosynthesis of both the bilayer- and non-bilayer-forming membrane glucolipids. Is able to successively transfer two glucosyl residues to diacylglycerol (DAG), thereby catalyzing the formation of beta-monoglucosyl-DAG (3-O-(beta-D-glucopyranosyl)-1,2-diacyl-sn-glycerol) and beta-diglucosyl-DAG (3-O-(beta-D-glucopyranosyl-beta-(1-&gt;6)-D-glucopyranosyl)-1,2-diacyl-sn-glycerol). Beta-diglucosyl-DAG is the predominant glycolipid found in Bacillales and is also used as a membrane anchor for lipoteichoic acid (LTA). The sequence is that of Processive diacylglycerol beta-glucosyltransferase from Staphylococcus aureus (strain bovine RF122 / ET3-1).